The chain runs to 590 residues: Potassium-transporting ATPase potassium-binding subunit (590 aa).

12 helical membrane passes run 3–23, 63–83, 134–154, 177–197, 284–304, 312–332, 359–379, 388–408, 411–431, 451–471, 515–535, and 558–578; these read AFLLQLAIYLVVLLVLAKPLG, HYALAVIVVNVLGALAVYALQ, GLAVQNFLSAATGIAVVIALI, VYVLLPLSIIVSVFFVSQGVI, FVQMLAIFIIPAALCFTFGGM, WAVLAAMTVLFVVLAVFLAWA, FGIVASSLFATITTAASCGAV, ALGGFVPMFLMQLGEVVFGGV, GLYGMLVYAILAVFIAGLMIG, IAILVTPLLVLVGTAVAVVVT, LALGICMWLGRFWIIVPVLAM, and LFVVLLIGSVLLVGALTYIPA.

It belongs to the KdpA family. As to quaternary structure, the system is composed of three essential subunits: KdpA, KdpB and KdpC.

Its subcellular location is the cell inner membrane. Its function is as follows. Part of the high-affinity ATP-driven potassium transport (or Kdp) system, which catalyzes the hydrolysis of ATP coupled with the electrogenic transport of potassium into the cytoplasm. This subunit binds the periplasmic potassium ions and delivers the ions to the membrane domain of KdpB through an intramembrane tunnel. The polypeptide is Potassium-transporting ATPase potassium-binding subunit (Ralstonia pickettii (strain 12J)).